The chain runs to 49 residues: Large ribosomal subunit protein bL33C (49 aa).

This sequence belongs to the bacterial ribosomal protein bL33 family.

In Lactococcus lactis subsp. cremoris (strain MG1363), this protein is Large ribosomal subunit protein bL33C.